A 276-amino-acid chain; its full sequence is Large ribosomal subunit protein uL2 (276 aa).

2 disordered regions span residues 14–58 (RNAS…GGGH) and 219–276 (PITR…KNRK). Positions 16–27 (ASVSDFSELTRS) are enriched in polar residues. The span at 255–276 (RRPKKASNKMIVRRRPSGKNRK) shows a compositional bias: basic residues.

This sequence belongs to the universal ribosomal protein uL2 family. Part of the 50S ribosomal subunit. Forms a bridge to the 30S subunit in the 70S ribosome.

Functionally, one of the primary rRNA binding proteins. Required for association of the 30S and 50S subunits to form the 70S ribosome, for tRNA binding and peptide bond formation. It has been suggested to have peptidyltransferase activity; this is somewhat controversial. Makes several contacts with the 16S rRNA in the 70S ribosome. The chain is Large ribosomal subunit protein uL2 from Bifidobacterium longum (strain DJO10A).